A 468-amino-acid polypeptide reads, in one-letter code: Phosphoglucosamine mutase (468 aa).

The Phosphoserine intermediate role is filled by serine 112. Mg(2+) contacts are provided by serine 112, aspartate 254, aspartate 256, and aspartate 258. Residue serine 112 is modified to Phosphoserine.

It belongs to the phosphohexose mutase family. Requires Mg(2+) as cofactor. Activated by phosphorylation.

The catalysed reaction is alpha-D-glucosamine 1-phosphate = D-glucosamine 6-phosphate. Functionally, catalyzes the conversion of glucosamine-6-phosphate to glucosamine-1-phosphate. The sequence is that of Phosphoglucosamine mutase from Prochlorococcus marinus (strain MIT 9313).